Consider the following 130-residue polypeptide: Small ribosomal subunit protein uS11 (130 aa).

This sequence belongs to the universal ribosomal protein uS11 family. In terms of assembly, part of the 30S ribosomal subunit. Interacts with proteins S7 and S18. Binds to IF-3.

In terms of biological role, located on the platform of the 30S subunit, it bridges several disparate RNA helices of the 16S rRNA. Forms part of the Shine-Dalgarno cleft in the 70S ribosome. This Teredinibacter turnerae (strain ATCC 39867 / T7901) protein is Small ribosomal subunit protein uS11.